Here is a 736-residue protein sequence, read N- to C-terminus: Alpha-xylosidase A (736 aa).

Positions 1-18 are cleaved as a signal peptide; that stretch reads MYFSSFLALGALVQAAAA. N-linked (GlcNAc...) asparagine glycans are attached at residues asparagine 24, asparagine 279, asparagine 332, and asparagine 376. Aspartate 413 is a catalytic residue. Residue asparagine 471 is glycosylated (N-linked (GlcNAc...) asparagine). Catalysis depends on aspartate 505, which acts as the Proton donor. N-linked (GlcNAc...) asparagine glycosylation is found at asparagine 655, asparagine 676, asparagine 690, and asparagine 701.

The protein belongs to the glycosyl hydrolase 31 family.

The protein localises to the secreted. The catalysed reaction is Hydrolysis of terminal, non-reducing alpha-D-xylose residues with release of alpha-D-xylose.. In terms of biological role, catalyzes the liberation of alpha-xylose from the non-reducing terminal glucose of xyloglucan oligosaccharides. This Aspergillus niger (strain ATCC MYA-4892 / CBS 513.88 / FGSC A1513) protein is Alpha-xylosidase A.